Reading from the N-terminus, the 703-residue chain is Leucine zipper putative tumor suppressor 3 (703 aa).

3 disordered regions span residues 1–22 (MAPADLASEGPKLEDPPAPHLF), 40–190 (RADP…SEPL), and 204–347 (FHSM…PPSP). Low complexity predominate over residues 96-107 (GSFPGPRSSGSG). The span at 109–124 (NRERPGPGRYPSEDKV) shows a compositional bias: basic and acidic residues. Residues 205–218 (HSMQNLCPPQTNGT) are compositionally biased toward polar residues. Residues 251 to 268 (DSGRNSLTSLPTYSSSYS) show a composition bias toward low complexity. Positions 290 to 299 (SSGGGGGGSG) are enriched in gly residues. Positions 304 to 324 (GTSDSGRASSKSGSSSSMGRS) are enriched in low complexity. Gly residues predominate over residues 325–336 (GHLGSGEGGNGG). S346 and S348 each carry phosphoserine. Coiled-coil stretches lie at residues 348–526 (SALI…SLRD) and 600–669 (TRAL…RLRE). The segment at 665 to 703 (RRLRERGAAGGSRTPTPQHGEEEKAWTPSRLERIESTEI) is disordered. Basic and acidic residues predominate over residues 683-703 (HGEEEKAWTPSRLERIESTEI).

This sequence belongs to the LZTS3 family. In terms of assembly, interacts (via C-terminus) with SHANK3 (via PDZ domain). Interacts (via coiled coil) with SIPA1L1. Can form homooligomers. Detected in brain, with highest expression in brain cortex, caudate putamen, cerebellum and hippocampus. Detected in neuropil (at protein level). Detected in brain and kidney.

The protein resides in the synapse. It is found in the postsynaptic density. The protein localises to the cell projection. It localises to the dendritic spine. Its subcellular location is the dendrite. The protein resides in the cytoplasm. It is found in the cytoskeleton. May be involved in promoting the maturation of dendritic spines, probably via regulating SIPA1L1 levels at the postsynaptic density of synapses. The protein is Leucine zipper putative tumor suppressor 3 of Rattus norvegicus (Rat).